Here is a 569-residue protein sequence, read N- to C-terminus: Protein Noxp20 (569 aa).

Disordered regions lie at residues 1–87, 102–126, and 165–208; these read MSDD…GEVT, GDTG…QAGR, and ANSA…GSRG. T197 carries the phosphothreonine modification. S262 carries the post-translational modification Phosphoserine. The interval 404 to 439 is disordered; sequence VSIDVAKGSEEEEKEEGKEEKAEEPEEDKTGGQGAK.

Belongs to the FAM114 family. Over-expressed in brain. Also detected in lung, stomach, and in a lower extent in testis and thymus.

It is found in the cytoplasm. Its function is as follows. May play a role in neuronal cell development. The protein is Protein Noxp20 (Fam114a1) of Mus musculus (Mouse).